A 533-amino-acid chain; its full sequence is Chromosomal replication initiator protein DnaA (533 aa).

Positions 1 to 72 (MNDFWQHCSA…DLARDFWNAP (72 aa)) are domain I, interacts with DnaA modulators. The interval 72–196 (PIEVQFVLDP…EAADSMYERS (125 aa)) is domain II. The tract at residues 83-120 (AGQRSPAGATPLAPRAPLPSANPAPVAPGPASAPAVDA) is disordered. Residues 96–110 (PRAPLPSANPAPVAP) are compositionally biased toward pro residues. Residues 111–120 (GPASAPAVDA) show a composition bias toward low complexity. Residues 197–413 (KLNPVLTFDN…GALRKILAYS (217 aa)) are domain III, AAA+ region. Residues glycine 241, glycine 243, lysine 244, and threonine 245 each contribute to the ATP site. The domain IV, binds dsDNA stretch occupies residues 414-533 (KFHGREITIE…LHVLEQTLKG (120 aa)).

Belongs to the DnaA family. As to quaternary structure, oligomerizes as a right-handed, spiral filament on DNA at oriC.

The protein resides in the cytoplasm. Its function is as follows. Plays an essential role in the initiation and regulation of chromosomal replication. ATP-DnaA binds to the origin of replication (oriC) to initiate formation of the DNA replication initiation complex once per cell cycle. Binds the DnaA box (a 9 base pair repeat at the origin) and separates the double-stranded (ds)DNA. Forms a right-handed helical filament on oriC DNA; dsDNA binds to the exterior of the filament while single-stranded (ss)DNA is stabiized in the filament's interior. The ATP-DnaA-oriC complex binds and stabilizes one strand of the AT-rich DNA unwinding element (DUE), permitting loading of DNA polymerase. After initiation quickly degrades to an ADP-DnaA complex that is not apt for DNA replication. Binds acidic phospholipids. The sequence is that of Chromosomal replication initiator protein DnaA from Burkholderia pseudomallei (strain 1710b).